The sequence spans 347 residues: Methylthioribose-1-phosphate isomerase (347 aa).

Residues arginine 45 to alanine 47, arginine 88, and glutamine 197 each bind substrate. Residue aspartate 238 is the Proton donor of the active site. Asparagine 248 to lysine 249 provides a ligand contact to substrate.

The protein belongs to the eIF-2B alpha/beta/delta subunits family. MtnA subfamily.

The enzyme catalyses 5-(methylsulfanyl)-alpha-D-ribose 1-phosphate = 5-(methylsulfanyl)-D-ribulose 1-phosphate. Its pathway is amino-acid biosynthesis; L-methionine biosynthesis via salvage pathway; L-methionine from S-methyl-5-thio-alpha-D-ribose 1-phosphate: step 1/6. Catalyzes the interconversion of methylthioribose-1-phosphate (MTR-1-P) into methylthioribulose-1-phosphate (MTRu-1-P). The sequence is that of Methylthioribose-1-phosphate isomerase from Trichormus variabilis (strain ATCC 29413 / PCC 7937) (Anabaena variabilis).